We begin with the raw amino-acid sequence, 129 residues long: Small ribosomal subunit protein uS11 (129 aa).

This sequence belongs to the universal ribosomal protein uS11 family. In terms of assembly, part of the 30S ribosomal subunit. Interacts with proteins S7 and S18. Binds to IF-3.

Functionally, located on the platform of the 30S subunit, it bridges several disparate RNA helices of the 16S rRNA. Forms part of the Shine-Dalgarno cleft in the 70S ribosome. The polypeptide is Small ribosomal subunit protein uS11 (Glaesserella parasuis serovar 5 (strain SH0165) (Haemophilus parasuis)).